The primary structure comprises 173 residues: Putative pre-16S rRNA nuclease (173 aa).

It belongs to the YqgF nuclease family.

It is found in the cytoplasm. In terms of biological role, could be a nuclease involved in processing of the 5'-end of pre-16S rRNA. This chain is Putative pre-16S rRNA nuclease, found in Psychrobacter cryohalolentis (strain ATCC BAA-1226 / DSM 17306 / VKM B-2378 / K5).